The following is a 31-amino-acid chain: Cyclotide vico-A (31 aa).

The cyclopeptide (Gly-Asn) cross-link spans 1–31; it reads GSIPCAESCVYIPCFTGIAGCSCKNKVCYYN. 3 disulfides stabilise this stretch: Cys5–Cys21, Cys9–Cys23, and Cys14–Cys28.

Belongs to the cyclotide family. Bracelet subfamily. This is a cyclic peptide.

In terms of biological role, probably participates in a plant defense mechanism. In Viola cotyledon (Violeta), this protein is Cyclotide vico-A.